A 264-amino-acid chain; its full sequence is Acetylglutamate kinase (264 aa).

Substrate-binding positions include 40–41, Arg62, and Asn158; that span reads GG.

The protein belongs to the acetylglutamate kinase family. ArgB subfamily.

The protein localises to the cytoplasm. It carries out the reaction N-acetyl-L-glutamate + ATP = N-acetyl-L-glutamyl 5-phosphate + ADP. It participates in amino-acid biosynthesis; L-arginine biosynthesis; N(2)-acetyl-L-ornithine from L-glutamate: step 2/4. Functionally, catalyzes the ATP-dependent phosphorylation of N-acetyl-L-glutamate. This Cytophaga hutchinsonii (strain ATCC 33406 / DSM 1761 / CIP 103989 / NBRC 15051 / NCIMB 9469 / D465) protein is Acetylglutamate kinase.